The chain runs to 268 residues: ClpXP adapter protein SpxH (268 aa).

It belongs to the SpxH family. In terms of assembly, interacts with Spx.

Its subcellular location is the cytoplasm. Functionally, adapter protein required for efficient degradation of Spx by ClpXP under non-stress conditions. Interaction with Spx stabilizes Spx and exposes the C-terminus of Spx for recognition and proteolysis by ClpXP. This Staphylococcus aureus (strain MRSA252) protein is ClpXP adapter protein SpxH.